The following is a 981-amino-acid chain: Mineralocorticoid receptor (981 aa).

A modulating region spans residues 1-603; it reads METKGYHSLP…STGSSRPSKI (603 aa). The segment covering 234–258 has biased composition (polar residues); sequence SLTCSPSVENRGSRSHSPTHASNVG. Disordered stretches follow at residues 234-331 and 355-376; these read SLTC…ASTV and AIQD…VPFP. Phosphoserine is present on residues Ser250, Ser259, Ser283, Ser287, and Ser299. Composition is skewed to low complexity over residues 259–300 and 309–327; these read SPLS…VSSP and SVSS…SSPT. Residues Cys604, Cys607, Cys621, Cys624, Cys640, Cys646, Cys656, and Cys659 each contribute to the Zn(2+) site. 2 NR C4-type zinc fingers span residues 604 to 624 and 640 to 664; these read CLVC…CGSC and CAGR…LQKC. Residues 604-669 constitute a DNA-binding region (nuclear receptor); it reads CLVCGDEASG…RLQKCLQAGM (66 aa). The tract at residues 670 to 722 is hinge; sequence NLGARKSKKLGKLKGLHEEQPQQPPPPPPQSPEEGTTYIAPTKEPSVNSALVP. The tract at residues 684–710 is disordered; that stretch reads GLHEEQPQQPPPPPPQSPEEGTTYIAP. The segment covering 691–700 has biased composition (pro residues); it reads QQPPPPPPQS. Positions 723 to 961 constitute an NR LBD domain; that stretch reads QLTSITHALT…EFPAMLVEII (239 aa). 21-hydroxyprogesterone contacts are provided by Asn767 and Gln773. 2 residues coordinate aldosterone: Asn767 and Gln773. The progesterone site is built by Asn767 and Gln773. Positions 779–782 are important for coactivator binding; the sequence is KWAK. 21-hydroxyprogesterone-binding residues include Arg814 and Thr942. The aldosterone site is built by Arg814 and Thr942. Progesterone is bound by residues Arg814 and Thr942.

Belongs to the nuclear hormone receptor family. NR3 subfamily. Heteromultimeric cytoplasmic complex with HSP90, HSP70, and FKBP4, in the absence of ligand. After ligand binding, it translocates to the nucleus and binds to DNA as a homodimer and as a heterodimer with NR3C1. Binds the coactivator NCOA2. May interact with HSD11B2 in the absence of ligand. Binds the coactivators NCOA1, TIF1 and NRIP1. Post-translationally, phosphorylated. As to expression, detected in liver, brain, heart, kidney, colon, aorta, hippocampus, hypothalamus and adrenal fasciculata.

It is found in the cytoplasm. The protein localises to the nucleus. The protein resides in the endoplasmic reticulum membrane. Functionally, receptor for both mineralocorticoids (MC) such as aldosterone and glucocorticoids (GC) such as corticosterone or cortisol. Binds to mineralocorticoid response elements (MRE) and transactivates target genes. The effect of MC is to increase ion and water transport and thus raise extracellular fluid volume and blood pressure and lower potassium levels. The polypeptide is Mineralocorticoid receptor (Nr3c2) (Rattus norvegicus (Rat)).